Consider the following 487-residue polypeptide: Calcium-binding tyrosine phosphorylation-regulated protein (487 aa).

Residues 12 to 49 (YGLKTLLEGISRAVLKTNPSDINQFAAAYFQELTMYRG) enclose the RIIa domain. Composition is skewed to basic and acidic residues over residues 78-91 (KKLE…KTSV) and 101-117 (KSTD…EYSD). 3 disordered regions span residues 78–163 (KKLE…AVSP), 243–271 (VDLG…QEPP), and 420–487 (IVSD…ATAE). Over residues 140–152 (SSSKPATPKATTP) the composition is skewed to low complexity. Composition is skewed to polar residues over residues 420 to 436 (IVSD…NSVP) and 455 to 464 (SGTSVKSSSG). Over residues 478–487 (IEPEGEATAE) the composition is skewed to acidic residues.

In terms of assembly, interacts with FSCB. Phosphorylated on tyrosine residues during in vitro capacitation. Dephosphorylation affects its ability to bind calcium.

Its subcellular location is the cytoplasm. The protein resides in the cytoskeleton. It localises to the cell projection. The protein localises to the cilium. It is found in the flagellum. Functionally, may function as a regulator of both motility- and head-associated functions such as capacitation and the acrosome reaction. May bind calcium in vitro. The chain is Calcium-binding tyrosine phosphorylation-regulated protein (CABYR) from Macaca fascicularis (Crab-eating macaque).